A 652-amino-acid polypeptide reads, in one-letter code: Fimbrin-4 (652 aa).

Calponin-homology (CH) domains are found at residues 116–233 (ESEK…KIQL), 261–364 (LAPE…HHRN), 388–494 (SREE…RYTM), and 509–617 (DITE…NWSL). Actin-binding stretches follow at residues 116 to 364 (ESEK…HHRN) and 388 to 617 (SREE…NWSL). The tract at residues 623-652 (TESTVSDDTDVSSVTEEISNLSTDDGSSDV) is disordered. A compositionally biased stretch (polar residues) spans 640–652 (ISNLSTDDGSSDV).

In terms of assembly, interacts with F-actin.

The protein localises to the cytoplasm. The protein resides in the cytoskeleton. Its function is as follows. Cross-links actin filaments (F-actin). Stabilizes and prevents F-actin depolymerization mediated by profilin. May regulate actin cytoarchitecture, cell cycle, cell division, cell elongation and cytoplasmic tractus. This chain is Fimbrin-4, found in Arabidopsis thaliana (Mouse-ear cress).